The chain runs to 322 residues: Major serine/threonine-protein phosphatase PP2A-2 catalytic subunit (322 aa).

Positions 70, 72, 98, and 130 each coordinate Mn(2+). H131 (proton donor) is an active-site residue. Mn(2+)-binding residues include H180 and H254. A Leucine methyl ester modification is found at L322.

The protein belongs to the PPP phosphatase family. PP-2A subfamily. Requires Mn(2+) as cofactor.

The enzyme catalyses O-phospho-L-seryl-[protein] + H2O = L-seryl-[protein] + phosphate. It catalyses the reaction O-phospho-L-threonyl-[protein] + H2O = L-threonyl-[protein] + phosphate. Essential role in cell cycle control. PP2A may be involved in controlling the entry into mitosis, possibly acting as an inhibitor. This chain is Major serine/threonine-protein phosphatase PP2A-2 catalytic subunit (ppa2), found in Schizosaccharomyces pombe (strain 972 / ATCC 24843) (Fission yeast).